The sequence spans 659 residues: DNA mismatch repair protein MutL (659 aa).

Residues 338–459 form a disordered region; the sequence is GAPRGASKPG…DTTSERDSLP (122 aa). Residues 352-362 show a composition bias toward basic and acidic residues; the sequence is SPEHSPTDRDA. Polar residues predominate over residues 374 to 391; the sequence is SDGNGQRTAASGATSESP.

The protein belongs to the DNA mismatch repair MutL/HexB family.

In terms of biological role, this protein is involved in the repair of mismatches in DNA. It is required for dam-dependent methyl-directed DNA mismatch repair. May act as a 'molecular matchmaker', a protein that promotes the formation of a stable complex between two or more DNA-binding proteins in an ATP-dependent manner without itself being part of a final effector complex. This Halobacterium salinarum (strain ATCC 29341 / DSM 671 / R1) protein is DNA mismatch repair protein MutL.